Reading from the N-terminus, the 94-residue chain is FXYD domain-containing ion transport regulator 6 (94 aa).

A signal peptide spans 1 to 17 (METVLVLCSLLAPVVLA). The Extracellular portion of the chain corresponds to 18–34 (SAAEKEKEKDPFYYDYQ). A helical transmembrane segment spans residues 35–57 (TLRIGGLVFAVVLFSVGILLILS). The Cytoplasmic segment spans residues 58-94 (RRCKCSFNQKPRAPGDEEAQVENLITTNAAEPQKAEN).

Belongs to the FXYD family. As to quaternary structure, regulatory subunit of the sodium/potassium-transporting ATPase which is composed of a catalytic alpha subunit, a non-catalytic beta subunit and an additional regulatory subunit. The regulatory subunit, a member of the FXYD protein family, modulates the enzymatic activity in a tissue- and isoform-specific way by changing affinities of the Na+/K+-ATPase toward Na(+), K(+) or ATP.

It is found in the cell membrane. Functionally, associates with and regulates the activity of the sodium/potassium-transporting ATPase (NKA) which catalyzes the hydrolysis of ATP coupled with the exchange of Na(+) and K(+) ions across the plasma membrane. Reduces the apparent affinity for intracellular Na(+) with no change in the apparent affinity for extracellular K(+). In addition to modulating NKA kinetics, may also function as a regulator of NKA localization to the plasma membrane. The sequence is that of FXYD domain-containing ion transport regulator 6 (Fxyd6) from Mus musculus (Mouse).